A 623-amino-acid polypeptide reads, in one-letter code: MRLLLWWVLVLSLFLDPLRAVEEHETDAVDLFLIFNQINQLNQVIETYKKNPERSAEISLYNTQKNDLIKSLTSKVLNERDKIGIDINQNLKEQEKIKKRLSKSIKGDDFYTFMKDRLSLDILLIDETLYRFIDKIRSSIDIFSEQKDVESISDAFLLRLGQFKLYTFPKNLGNVKMHELEQMFSDYELRLNTYTEVLRYIKNHPKEVLPKNLIMEVNMDFVLNKISKVLPFTAHSLQVSKIALALMILALLLGLRKLITWLLALLLDRIFEIMQRNKKMHVNVQSSIVSPVSVFLALFSCDVALDIFYYPNASPPKVSMWVGAVYIMLLAWLVIALFKGYGEALVTNVATKSTHNFRKEVINLILKVVYFLIFIVALLGVLKQLGFNVSAIIASLGIGGLAVALAVKDVLANFFASVILLLDNSFSQGDWIVCGEVEGTVVEMGLRRTTIRAFDNALLSVPNSELAGKPIRNWSRRKVGRRIKMEIGLTYSSSQSALQLCVKDIKEMLENHPKIANGADSALQNASDYRYMFKKDIVSIDDFLGYKNNLFVFLDQFADSSINILVYCFSKTVVWEEWLEVKEDVMLKIMGIVEKHHLSFAFPSQSLYVESLPEVSLKEGAKI.

A run of 5 helical transmembrane segments spans residues 242-262 (IALA…ITWL), 288-308 (IVSP…LDIF), 318-338 (VSMW…IALF), 361-381 (VINL…LLGV), and 387-407 (FNVS…ALAV).

Belongs to the MscS (TC 1.A.23) family.

Its subcellular location is the cell membrane. This is an uncharacterized protein from Helicobacter pylori (strain J99 / ATCC 700824) (Campylobacter pylori J99).